Here is a 101-residue protein sequence, read N- to C-terminus: MVGLSHYLILGSLLFAISVVGIFLNRKNVIVLLMAIELMLLAVNLNFIAFSHYLQDTAGQVFVFFILTVAAAESAIGLAILVVLFRNLKTINVDDINSLKG.

Transmembrane regions (helical) follow at residues 4–24 (LSHYLILGSLLFAISVVGIFL), 30–50 (IVLLMAIELMLLAVNLNFIAF), and 61–81 (VFVFFILTVAAAESAIGLAIL).

The protein belongs to the complex I subunit 4L family. As to quaternary structure, NDH-1 is composed of 14 different subunits. Subunits NuoA, H, J, K, L, M, N constitute the membrane sector of the complex.

It localises to the cell inner membrane. The enzyme catalyses a quinone + NADH + 5 H(+)(in) = a quinol + NAD(+) + 4 H(+)(out). Functionally, NDH-1 shuttles electrons from NADH, via FMN and iron-sulfur (Fe-S) centers, to quinones in the respiratory chain. The immediate electron acceptor for the enzyme in this species is believed to be ubiquinone. Couples the redox reaction to proton translocation (for every two electrons transferred, four hydrogen ions are translocated across the cytoplasmic membrane), and thus conserves the redox energy in a proton gradient. This Methylovorus glucosotrophus (strain SIP3-4) protein is NADH-quinone oxidoreductase subunit K.